The sequence spans 604 residues: Phosphoprotein (604 aa).

2 disordered regions span residues 1–22 and 39–360; these read MESD…RDKS and DPQE…EESN. The segment at 22–42 is N0 binding; the sequence is STNISSALNIIEFILSTDPQE. Polar residues-rich tracts occupy residues 47–61 and 74–90; these read NDTI…SATI and KVSG…SSHE. The segment covering 91 to 101 has biased composition (basic and acidic residues); it reads CTTEAKDRNID. Residues 129 to 144 are compositionally biased toward polar residues; that stretch reads GSITDSKNGTQNTENI. Residues 147 to 163 show a composition bias toward basic and acidic residues; that stretch reads NEIRKMDKDSIERKMRQ. Residues 197–207 show a composition bias toward polar residues; it reads TPDTRSMSVVT. The span at 245–267 shows a compositional bias: basic and acidic residues; it reads KGKDWFKKSRDTDNQTSTSDHKP. 2 stretches are compositionally biased toward low complexity: residues 277 to 300 and 317 to 328; these read KTTT…ETQS and TSTTPPTTTPRS. The span at 330–360 shows a compositional bias: basic and acidic residues; sequence RTKESIRTNSESKPKTQKTIGKERKDTEESN. The tract at residues 400 to 470 is multimerization; the sequence is VDTASKIDFL…SLISNLKIMT (71 aa). Residues 424 to 451 are a coiled coil; that stretch reads LIQIQNEMLNLKADLKRMDESHRRLIEN. The segment at 450–483 is l protein binding; the sequence is ENQREQLSLITSLISNLKIMTERGGKKDQNESNE. Residues 585–604 form an interaction with the nucleocapsid (N-RNA) region; sequence KSDEEVSELMDMFNEDVNNC.

The protein belongs to the respirovirus P protein family. Homotetramer. Interacts (via multimerization domain) with polymerase L; this interaction forms the polymerase L-P complex. Interacts (via N-terminus) with N0; this interaction allows P to chaperon N0 to avoid N polymerization before encapsidation. Interacts (via C-terminus) with N-RNA template; this interaction positions the polymerase on the template. Interacts with host PI4KB; this interaction allows P to recruit PI4KB to the viral factories to generate PI4P to facilitate viral replication.

Functionally, essential cofactor of the RNA polymerase L that plays a central role in the transcription and replication by forming the polymerase complex with RNA polymerase L and recruiting L to the genomic N-RNA template for RNA synthesis. Also plays a central role in the encapsidation of nascent RNA chains by forming the encapsidation complex with the nucleocapsid protein N (N-P complex). Acts as a chaperone for newly synthesized free N protein, so-called N0, allowing encapsidation of nascent RNA chains during replication. The nucleoprotein protein N prevents excessive phosphorylation of P, which leads to down-regulation of viral transcription/ replication. Participates, together with N, in the formation of viral factories (viroplasms), which are large inclusions in the host cytoplasm where replication takes place. Recruits host PI4KB and remodel the host endoplasmic reticulum membrane to form viral replication factories. This Human parainfluenza 3 virus (strain Wash/47885/57) (HPIV-3) protein is Phosphoprotein (P/V/D).